Reading from the N-terminus, the 294-residue chain is Glyceraldehyde-3-phosphate dehydrogenase (294 aa).

Residues aspartate 19, arginine 63, and threonine 105 each coordinate NAD(+). Residues 134 to 136 (SCT) and threonine 165 each bind D-glyceraldehyde 3-phosphate. The active-site Nucleophile is cysteine 135. Residues 169-188 (KTVDGPSHKDWRGGRGASQN) form a disordered region. Residues 194–195 (TG) and arginine 217 each bind D-glyceraldehyde 3-phosphate.

This sequence belongs to the glyceraldehyde-3-phosphate dehydrogenase family. As to quaternary structure, homotetramer.

The protein localises to the cytoplasm. It catalyses the reaction D-glyceraldehyde 3-phosphate + phosphate + NAD(+) = (2R)-3-phospho-glyceroyl phosphate + NADH + H(+). The protein operates within carbohydrate degradation; glycolysis; pyruvate from D-glyceraldehyde 3-phosphate: step 1/5. Its function is as follows. Catalyzes the oxidative phosphorylation of glyceraldehyde 3-phosphate (G3P) to 1,3-bisphosphoglycerate (BPG) using the cofactor NAD. The first reaction step involves the formation of a hemiacetal intermediate between G3P and a cysteine residue, and this hemiacetal intermediate is then oxidized to a thioester, with concomitant reduction of NAD to NADH. The reduced NADH is then exchanged with the second NAD, and the thioester is attacked by a nucleophilic inorganic phosphate to produce BPG. This is Glyceraldehyde-3-phosphate dehydrogenase (gap) from Citrobacter freundii.